A 242-amino-acid polypeptide reads, in one-letter code: Carboxy-S-adenosyl-L-methionine synthase (242 aa).

Residues Y39, G64 to S66, D89 to N90, D117 to I118, N132, and R199 each bind S-adenosyl-L-methionine.

It belongs to the class I-like SAM-binding methyltransferase superfamily. Cx-SAM synthase family. Homodimer.

It carries out the reaction prephenate + S-adenosyl-L-methionine = carboxy-S-adenosyl-L-methionine + 3-phenylpyruvate + H2O. Catalyzes the conversion of S-adenosyl-L-methionine (SAM) to carboxy-S-adenosyl-L-methionine (Cx-SAM). This chain is Carboxy-S-adenosyl-L-methionine synthase, found in Aliivibrio fischeri (strain ATCC 700601 / ES114) (Vibrio fischeri).